We begin with the raw amino-acid sequence, 1292 residues long: ABC multidrug transporter MDR5 (1292 aa).

Residues 1 to 43 (MTEEPKPVTPVLRDGEAGLDTTAPTEAGSLGEEAPKKEADGIV) form a disordered region. The next 2 helical transmembrane spans lie at 79–99 (ICGF…TIIF) and 128–148 (LWFV…TICF). The region spanning 81-370 (GFFAAVASGT…IAPTLGEFTK (290 aa)) is the ABC transmembrane type-1 1 domain. A glycan (N-linked (GlcNAc...) asparagine) is linked at N149. The next 4 helical transmembrane spans lie at 202 to 222 (VGTC…AFTQ), 226 to 246 (LTLP…ITVA), 314 to 334 (EFFI…KLLL), and 344 to 364 (ILTV…IAPT). The ABC transporter 1 domain maps to 405–650 (LELSNAVFSY…KGQYWSLVNA (246 aa)). ATP is bound at residue 440-447 (GASGSGKS). A glycan (N-linked (GlcNAc...) asparagine) is linked at N494. The tract at residues 656–691 (ASDDSSSDTDKETDTQPAEILEKHATTKSTHSKVPH) is disordered. Positions 663 to 680 (DTDKETDTQPAEILEKHA) are enriched in basic and acidic residues. Transmembrane regions (helical) follow at residues 720–740 (HWLF…AFPA) and 768–788 (LMFF…GFFL). The 288-residue stretch at 725-1012 (LLGGIASVVS…IFGFTMNTTK (288 aa)) folds into the ABC transmembrane type-1 2 domain. N820 carries an N-linked (GlcNAc...) asparagine glycan. The next 4 helical transmembrane spans lie at 844-864 (IGLI…ALVT), 866-886 (WKLA…AGFI), 949-969 (IAMI…ALAF), and 986-1006 (FFVI…IFGF). N-linked (GlcNAc...) asparagine glycans are attached at residues N1009, N1031, and N1052. The ABC transporter 2 domain occupies 1048–1285 (VEFRNVSFSY…KGRYFEMCKA (238 aa)). 1083–1090 (GPSGCGKT) contacts ATP.

The protein belongs to the ABC transporter superfamily. ABCB family. Multidrug resistance exporter (TC 3.A.1.201) subfamily.

The protein resides in the cell membrane. It carries out the reaction itraconazole(in) + ATP + H2O = itraconazole(out) + ADP + phosphate + H(+). Pleiotropic ABC efflux transporter involved in the modulation susceptibility to itraconazole. The polypeptide is ABC multidrug transporter MDR5 (Trichophyton rubrum (strain ATCC MYA-4607 / CBS 118892) (Athlete's foot fungus)).